The following is a 630-amino-acid chain: Mesothelin (630 aa).

The signal sequence occupies residues 1–36 (MALPTARPLLGSCGTPALGSLLFLLFSLGWVQPSRT). A glycan (N-linked (GlcNAc...) asparagine) is linked at Asn-57. The residue at position 200 (Ser-200) is a Phosphoserine; by FAM20C. The required for megakaryocyte-potentiating factor activity stretch occupies residues 262–286 (SIPQGIVAAWRQRSSRDPSWRQPER). Cys-302 and Cys-326 form a disulfide bridge. Asn-388, Asn-496, and Asn-523 each carry an N-linked (GlcNAc...) asparagine glycan. A lipid anchor (GPI-anchor amidated serine) is attached at Ser-606. The propeptide at 607–630 (GTPCLLGPGPVLTVLALLLASTLA) is removed in mature form.

This sequence belongs to the mesothelin family. In terms of assembly, interacts with MUC16. In terms of processing, both MPF and the cleaved form of mesothelin are N-glycosylated. Proteolytically cleaved by a furin-like convertase to generate megakaryocyte-potentiating factor (MPF), and the cleaved form of mesothelin. Expressed in lung. Expressed at low levels in heart, placenta and kidney. Expressed in mesothelial cells. Highly expressed in mesotheliomas, ovarian cancers, and some squamous cell carcinomas (at protein level).

It is found in the cell membrane. The protein resides in the golgi apparatus. Its subcellular location is the secreted. Membrane-anchored forms may play a role in cellular adhesion. Its function is as follows. Megakaryocyte-potentiating factor (MPF) potentiates megakaryocyte colony formation in vitro. This chain is Mesothelin (MSLN), found in Homo sapiens (Human).